Consider the following 66-residue polypeptide: Small ribosomal subunit protein bS21 (66 aa).

The protein belongs to the bacterial ribosomal protein bS21 family.

The chain is Small ribosomal subunit protein bS21 from Solidesulfovibrio magneticus (strain ATCC 700980 / DSM 13731 / RS-1) (Desulfovibrio magneticus).